The primary structure comprises 99 residues: Elongin-C (99 aa).

The residue at position 2 (S2) is an N-acetylserine. S2 carries the post-translational modification Phosphoserine.

This sequence belongs to the SKP1 family. Heterodimer with ELA1. Component of a CRL3 E3 ubiquitin ligase complex consisting of the cullin CUL3, the linker protein ELC1, the substrate receptor ELA1, and the RING protein HRT1. Interacts with CIN5. Interacts with PCL6. Interacts with SNF4. Interacts with the large RNA polymerase II subunit RPO21 in a manner dependent on DEF1. Interacts with DEF1. Interacts with RAD7. Interacts with RAD16.

It localises to the cytoplasm. Its subcellular location is the nucleus. Functionally, as part of the CRL3 E3 ubiquitin ligase complex; polyubiquitylates monoubiquitylated RNA polymerase II subunit RPO21 to trigger its proteolysis; plays a role in global genomic repair. Prevents degradation of interacting proteins like PCL6 by the proteasome. In Saccharomyces cerevisiae (strain ATCC 204508 / S288c) (Baker's yeast), this protein is Elongin-C (ELC1).